The primary structure comprises 206 residues: Probable N-acetyltransferase 14 (206 aa).

Residues 6–206 (LSVREMREDE…MLVREFSKDL (201 aa)) enclose the N-acetyltransferase domain. Residues 57–77 (FILASFALALLLPVFLAVAAV) form a helical membrane-spanning segment.

This sequence belongs to the camello family.

It localises to the membrane. In terms of biological role, probable acetyltransferase that binds the 5'-GGACTACAG-3' sequence of coproporphyrinogen oxidase promoter. Able to activate transcription of a reporter construct in vitro. Functionally, probable acetyltransferase. Its function is as follows. May act as a transcription factor regulating the expression of coproporphyrinogen oxidase by binding to a promoter regulatory element. This chain is Probable N-acetyltransferase 14 (Nat14), found in Mus musculus (Mouse).